The sequence spans 359 residues: 3-dehydroquinate synthase (359 aa).

NAD(+) is bound by residues 72-77 (EGEEHK), 106-110 (GVVGD), 130-131 (TT), lysine 143, lysine 152, and 170-173 (TLTT). Zn(2+) is bound by residues glutamate 185, histidine 248, and histidine 265.

The protein belongs to the sugar phosphate cyclases superfamily. Dehydroquinate synthase family. It depends on Co(2+) as a cofactor. Zn(2+) serves as cofactor. Requires NAD(+) as cofactor.

The protein localises to the cytoplasm. The enzyme catalyses 7-phospho-2-dehydro-3-deoxy-D-arabino-heptonate = 3-dehydroquinate + phosphate. Its pathway is metabolic intermediate biosynthesis; chorismate biosynthesis; chorismate from D-erythrose 4-phosphate and phosphoenolpyruvate: step 2/7. In terms of biological role, catalyzes the conversion of 3-deoxy-D-arabino-heptulosonate 7-phosphate (DAHP) to dehydroquinate (DHQ). In Pelobacter propionicus (strain DSM 2379 / NBRC 103807 / OttBd1), this protein is 3-dehydroquinate synthase.